Here is a 502-residue protein sequence, read N- to C-terminus: Hexokinase-4 (502 aa).

A helical transmembrane segment spans residues 4–24; that stretch reads VLVMLTAAAAVVACSVATVMV. One can recognise a Hexokinase domain in the interval 35-491; the sequence is RRVVGLLKDL…SSIGSALLLA (457 aa). Positions 90-228 are hexokinase small subdomain; the sequence is NGSETGTYYA…GLDIRVAALV (139 aa). 2 residues coordinate ADP: Gly104 and Ser105. Residues Thr194, Lys195, Asn229, and Asp230 each coordinate D-glucose. Positions 229 to 480 are hexokinase large subdomain; that stretch reads NDTVGALSFG…QHVVVKAMED (252 aa). Thr253 is an ADP binding site. Residues Asn256, Glu284, and Glu315 each coordinate D-glucose. Residue Gly445 coordinates ADP.

The protein belongs to the hexokinase family.

Its subcellular location is the mitochondrion outer membrane. It catalyses the reaction a D-hexose + ATP = a D-hexose 6-phosphate + ADP + H(+). The enzyme catalyses D-fructose + ATP = D-fructose 6-phosphate + ADP + H(+). It carries out the reaction D-glucose + ATP = D-glucose 6-phosphate + ADP + H(+). The protein operates within carbohydrate metabolism; hexose metabolism. It participates in carbohydrate degradation; glycolysis; D-glyceraldehyde 3-phosphate and glycerone phosphate from D-glucose: step 1/4. Fructose and glucose phosphorylating enzyme. May be involved in the phosphorylation of glucose during the export from mitochondrion to cytosol. This is Hexokinase-4 from Arabidopsis thaliana (Mouse-ear cress).